A 31-amino-acid polypeptide reads, in one-letter code: Cytochrome b6-f complex subunit 6 (31 aa).

Residues 4-26 (IVSYFGFLLTASTITPALFIGLS) traverse the membrane as a helical segment.

This sequence belongs to the PetL family. As to quaternary structure, the 4 large subunits of the cytochrome b6-f complex are cytochrome b6, subunit IV (17 kDa polypeptide, PetD), cytochrome f and the Rieske protein, while the 4 small subunits are PetG, PetL, PetM and PetN. The complex functions as a dimer.

The protein localises to the plastid. It is found in the chloroplast thylakoid membrane. Functionally, component of the cytochrome b6-f complex, which mediates electron transfer between photosystem II (PSII) and photosystem I (PSI), cyclic electron flow around PSI, and state transitions. PetL is important for photoautotrophic growth as well as for electron transfer efficiency and stability of the cytochrome b6-f complex. The protein is Cytochrome b6-f complex subunit 6 of Nymphaea alba (White water-lily).